A 3933-amino-acid chain; its full sequence is Protein DOP1 homolog PFC0245c (3933 aa).

Helical transmembrane passes span 70–90 (LNPLLPSGVHSKALIIYSSIF), 98–118 (FINNIHILCSGIFEFMLHCTI), 140–160 (IFAYALLLSLFNVVDSDNNIL), and 163–183 (IYSINNYIGENIFFNNIWLLL). Disordered regions lie at residues 468–494 (RLNNNNNNNNNNNNNNNNNGDNLKYQG), 543–600 (ININ…NMLH), and 614–656 (KKIN…SSSS). Low complexity predominate over residues 470-486 (NNNNNNNNNNNNNNNNN). Residues 546–561 (NDDDNLNYDDNEDDEY) show a composition bias toward acidic residues. Low complexity-rich tracts occupy residues 563–576 (NYHNNNYNDRNYFN) and 585–597 (ENNNNNNHSNNNN). A coiled-coil region spans residues 620–651 (GQTNNYDDDEEEEDEEEEDNNNNTSYNNNNNN). Positions 625–639 (YDDDEEEEDEEEEDN) are enriched in acidic residues. The span at 640–656 (NNNTSYNNNNNNSSSSS) shows a compositional bias: low complexity. The next 3 membrane-spanning stretches (helical) occupy residues 782–802 (MLNLNLISYENILNIFLYTFY), 842–862 (YLYIQFLFHFNLATLKLMNFL), and 1186–1206 (FYFWCFLFLHIIRINFNKSLL). Residues 1216-1255 (DDTDDDDDDDDDDDDEEEDDDDEDDDDEDDEEEDDEEDLG) show a composition bias toward acidic residues. Disordered regions lie at residues 1216–1284 (DDTD…MNKK) and 1361–1405 (TNNN…NNFN). Residues 1263–1284 (SSKKGKKKKKKSVHKNKLMNKK) are compositionally biased toward basic residues. The stretch at 1349 to 1403 (ELNKMKYMNEDITNNNNNINNNSNNNNNNKNNINNNNNNNNNNNNNNNNLNNLNN) forms a coiled coil. The segment covering 1362–1405 (NNNNNINNNSNNNNNNKNNINNNNNNNNNNNNNNNNLNNLNNFN) has biased composition (low complexity). 2 helical membrane passes run 1462 to 1482 (FIKLFFDINYLYFFCDNMFCL) and 1997 to 2017 (KNIFFIMKFCQFLIEIFKLIY). A disordered region spans residues 2691-2739 (HRRKMNRQNIRTDSSNNNNNNNINSNNNNNNNNNNNNNNNNNNNNNIYN). The span at 2704-2739 (SSNNNNNNNINSNNNNNNNNNNNNNNNNNNNNNIYN) shows a compositional bias: low complexity. 5 helical membrane passes run 2860 to 2880 (INLNEFMYFLFNIYLNICTLT), 2905 to 2925 (IMSSLWFLYILFIIENNHIYV), 3017 to 3037 (YSEIAAINALSFLLMCFYHTV), 3200 to 3220 (ILILICIIIIKNDENEIYIII), and 3276 to 3296 (IIINILIKRNVSFINFYSWIF). The disordered stretch occupies residues 3620–3646 (LKNEKSTRTYNSSLQEGSDYDEEEDEE). Residues 3637–3646 (SDYDEEEDEE) show a composition bias toward acidic residues. Residues 3897-3925 (KEETIILLKELNSVENDINDLFLEVDLNE) are a coiled coil.

This sequence belongs to the DOP1 family.

Its subcellular location is the membrane. May be involved in protein traffic between late Golgi and early endosomes. In Plasmodium falciparum (isolate 3D7), this protein is Protein DOP1 homolog PFC0245c.